The primary structure comprises 342 residues: Zinc transporter ZIP11 (342 aa).

7 helical membrane passes run 12-32, 44-64, 72-92, 194-214, 263-285, 290-307, and 322-342; these read LLGTFFTWAMTAAGAALVFIF, LGFAAGVMLAASYWSLLAPAV, GFGAFAFFPVAVGFTLGAAFV, IALLILAITIHNIPEGLAVGV, FWYGQLSGMVEPLAGVFGAFAVV, ILPYALAFAAGAMVYVVM, and LASWASILGFVVMMSLDVGLG.

The protein belongs to the ZIP transporter (TC 2.A.5) family. As to expression, highly expressed in the testes and portions of the digestive system including the stomach, ileum and cecum. In contrast, expressed at very low levels in liver, duodenum, jejunum, and colon.

The protein localises to the cell membrane. The protein resides in the nucleus. It localises to the cytoplasm. Its subcellular location is the golgi apparatus. It carries out the reaction Zn(2+)(in) = Zn(2+)(out). The enzyme catalyses Cu(2+)(in) = Cu(2+)(out). Its function is as follows. Zinc importer that regulates cytosolic zinc concentration either via zinc influx from the extracellular compartment or efflux from intracellular organelles such as Golgi apparatus. May transport copper ions as well. The transport mechanism remains to be elucidated. The sequence is that of Zinc transporter ZIP11 (Slc39a11) from Mus musculus (Mouse).